The primary structure comprises 380 residues: cAMP-dependent protein kinase type I-alpha regulatory subunit (380 aa).

At Met1 the chain carries N-acetylmethionine. The residue at position 2 (Ala2) is an N-acetylalanine; in cAMP-dependent protein kinase type I-alpha regulatory subunit, N-terminally processed. Residues Ala2 to Val135 are dimerization and phosphorylation. A phosphoserine mark is found at Ser3, Ser76, and Ser82. The segment at Ile64–Arg96 is disordered. Residues Arg95–Ile99 carry the Pseudophosphorylation motif motif. Position 100 is a phosphoserine (Ser100). Residues Leu136–Ser253, Glu201, Arg210, Ile254–Val380, Glu325, and Arg334 contribute to the 3',5'-cyclic AMP site. The residue at position 257 (Ser257) is a Phosphoserine.

Belongs to the cAMP-dependent kinase regulatory chain family. The inactive holoenzyme is composed of two regulatory chains and two catalytic chains. Activation by cAMP releases the two active catalytic monomers and the regulatory dimer. Interacts with PRKACA and PRKACB. PRKAR1A also interacts with RFC2; the complex may be involved in cell survival. Interacts with AKAP4. Interacts with RARA; the interaction occurs in the presence of cAMP or FSH and regulates RARA transcriptional activity. Interacts with the phosphorylated form of PJA2. Interacts with CBFA2T3. Interacts with PRKX; regulates this cAMP-dependent protein kinase. Interacts with smAKAP; this interaction may target PRKAR1A to the plasma membrane. Interacts with AICDA. Post-translationally, the pseudophosphorylation site binds to the substrate-binding region of the catalytic chain, resulting in the inhibition of its activity. Four types of regulatory chains are found: I-alpha, I-beta, II-alpha, and II-beta. Their expression varies among tissues and is in some cases constitutive and in others inducible.

It localises to the cell membrane. Regulatory subunit of the cAMP-dependent protein kinases involved in cAMP signaling in cells. The sequence is that of cAMP-dependent protein kinase type I-alpha regulatory subunit (PRKAR1A) from Sus scrofa (Pig).